The chain runs to 316 residues: Pantothenate kinase (316 aa).

Position 95–102 (95–102) interacts with ATP; the sequence is GSVAVGKS.

This sequence belongs to the prokaryotic pantothenate kinase family.

The protein resides in the cytoplasm. The catalysed reaction is (R)-pantothenate + ATP = (R)-4'-phosphopantothenate + ADP + H(+). The protein operates within cofactor biosynthesis; coenzyme A biosynthesis; CoA from (R)-pantothenate: step 1/5. The protein is Pantothenate kinase of Erwinia tasmaniensis (strain DSM 17950 / CFBP 7177 / CIP 109463 / NCPPB 4357 / Et1/99).